We begin with the raw amino-acid sequence, 293 residues long: Elongation factor Ts (293 aa).

The interval 80 to 83 is involved in Mg(2+) ion dislocation from EF-Tu; sequence TDFV.

Belongs to the EF-Ts family.

It localises to the cytoplasm. Its function is as follows. Associates with the EF-Tu.GDP complex and induces the exchange of GDP to GTP. It remains bound to the aminoacyl-tRNA.EF-Tu.GTP complex up to the GTP hydrolysis stage on the ribosome. The chain is Elongation factor Ts from Burkholderia lata (strain ATCC 17760 / DSM 23089 / LMG 22485 / NCIMB 9086 / R18194 / 383).